Here is a 404-residue protein sequence, read N- to C-terminus: Cysteine desulfurase IscS (404 aa).

Pyridoxal 5'-phosphate is bound by residues 75–76 (AT), Asn-155, Gln-183, and 203–205 (SAH). Lys-206 is modified (N6-(pyridoxal phosphate)lysine). Thr-243 is a binding site for pyridoxal 5'-phosphate. The active-site Cysteine persulfide intermediate is the Cys-328. [2Fe-2S] cluster is bound at residue Cys-328.

The protein belongs to the class-V pyridoxal-phosphate-dependent aminotransferase family. NifS/IscS subfamily. As to quaternary structure, homodimer. Forms a heterotetramer with IscU, interacts with other sulfur acceptors. It depends on pyridoxal 5'-phosphate as a cofactor.

Its subcellular location is the cytoplasm. It carries out the reaction (sulfur carrier)-H + L-cysteine = (sulfur carrier)-SH + L-alanine. Its pathway is cofactor biosynthesis; iron-sulfur cluster biosynthesis. Master enzyme that delivers sulfur to a number of partners involved in Fe-S cluster assembly, tRNA modification or cofactor biosynthesis. Catalyzes the removal of elemental sulfur atoms from cysteine to produce alanine. Functions as a sulfur delivery protein for Fe-S cluster synthesis onto IscU, an Fe-S scaffold assembly protein, as well as other S acceptor proteins. In Tolumonas auensis (strain DSM 9187 / NBRC 110442 / TA 4), this protein is Cysteine desulfurase IscS.